Here is a 207-residue protein sequence, read N- to C-terminus: 23 kDa calcium-binding protein (207 aa).

M1 bears the Blocked amino end (Met) mark. EF-hand domains follow at residues 17 to 52, 60 to 95, 119 to 154, and 161 to 196; these read AKLDVARKLFAQFDSNKNGTLDPSEVAGLIKTTFEN, VTADDVKLYMKSVDVDNNGLVSYSEYEEYVIACLKK, MKLDVARRLFAKYDSDKSGQLEEKEVYGVITETYKQ, and PTEADVKLWMSMTDTDKNGTVSIVEYEDFVISGLKK. The Ca(2+) site is built by D30, N32, N34, T36, E41, D73, D75, N77, E84, D132, D134, S136, Q138, E143, D174, D176, N178, T180, and E185.

Its function is as follows. Expected to play a crucial role in calcium-dependent regulation of ciliary movement. The protein is 23 kDa calcium-binding protein of Tetrahymena thermophila.